The following is a 130-amino-acid chain: Small ribosomal subunit protein uS9 (130 aa).

This sequence belongs to the universal ribosomal protein uS9 family.

This chain is Small ribosomal subunit protein uS9, found in Burkholderia pseudomallei (strain K96243).